Here is a 177-residue protein sequence, read N- to C-terminus: Parathyroid hormone-related protein (177 aa).

Positions 1-24 (MQRRLVQQWSVAVFLLSYAVPSCG) are cleaved as a signal peptide. A propeptide spanning residues 25–34 (RSVEGLSRRL) is cleaved from the precursor. The segment at 57-68 (RFFLHHLIAEIH) is important for receptor binding. A disordered region spans residues 74–177 (ATSEVSPNSK…TSLELDSRRH (104 aa)). The span at 76-90 (SEVSPNSKPSPNTKN) shows a compositional bias: polar residues. The Nuclear localization signal motif lies at 108-129 (TNKVETYKEQPLKTPGKKKKGK). Basic and acidic residues predominate over residues 109–118 (NKVETYKEQP). The span at 122-132 (PGKKKKGKPGK) shows a compositional bias: basic residues.

The protein belongs to the parathyroid hormone family. As to quaternary structure, interacts with PTH1R (via N-terminal extracellular domain). In terms of processing, there are 3 principal secretory forms, called PTHrP[1-36], PTHrP[38-94], and osteostatin (PTHrP[107-139]) arising from endoproteolytic cleavage of the initial translation product. Each of these secretory forms is believed to have one or more of its own receptors that mediates the normal paracrine, autocrine and endocrine actions. Ubiquitous. Also expressed in the mammary gland.

The protein resides in the secreted. It localises to the cytoplasm. Its subcellular location is the nucleus. Neuroendocrine peptide which is a critical regulator of cellular and organ growth, development, migration, differentiation and survival and of epithelial calcium ion transport. Acts by binding to its receptor, PTH1R, activating G protein-coupled receptor signaling. Regulates endochondral bone development and epithelial-mesenchymal interactions during the formation of the mammary glands and teeth. Required for skeletal homeostasis. Promotes mammary mesenchyme differentiation and bud outgrowth by modulating mesenchymal cell responsiveness to BMPs. Up-regulates BMPR1A expression in the mammary mesenchyme and this increases the sensitivity of these cells to BMPs and allows them to respond to BMP4 in a paracrine and/or autocrine fashion. BMP4 signaling in the mesenchyme, in turn, triggers epithelial outgrowth and augments MSX2 expression, which causes the mammary mesenchyme to inhibit hair follicle formation within the nipple sheath. Promotes colon cancer cell migration and invasion in an integrin alpha-6/beta-1-dependent manner through activation of Rac1. Functionally, potent inhibitor of osteoclastic bone resorption. This Homo sapiens (Human) protein is Parathyroid hormone-related protein.